The following is a 622-amino-acid chain: Calmodulin-binding protein 60 C (622 aa).

A compositionally biased stretch (basic and acidic residues) spans 1 to 19 (MQTRYMERTNSMREKRKLE). Residues 1-35 (MQTRYMERTNSMREKRKLEEDDNQQQQQQPERKRP) form a disordered region. Residues 10-89 (NSMREKRKLE…RLSERSSPKR (80 aa)) are calmodulin-binding. The interval 159–282 (EDDDGWSGEE…AFHKKLNKAG (124 aa)) is DNA-binding.

It belongs to the plant ACBP60 protein family. As to quaternary structure, interacts with calmodulin (CaM). In terms of tissue distribution, expressed in stems, flowers and root.

It is found in the nucleus. Transcription activator that binds DNA in a sequence-specific manner, likely 5'-GAAATTTTGG-3', to promote the expression of target genes. The polypeptide is Calmodulin-binding protein 60 C (Arabidopsis thaliana (Mouse-ear cress)).